A 448-amino-acid chain; its full sequence is Methionine aminopeptidase 2-1 (448 aa).

The tract at residues 1–90 (MAAQASEKLE…PPRVPVSSLF (90 aa)) is disordered. Over residues 22–33 (AAGPAKAGQADA) the composition is skewed to low complexity. Acidic residues predominate over residues 34–46 (GEVEDESDDDADD). Residues 47–58 (AGAAADGAANGA) show a composition bias toward low complexity. Positions 59–74 (AKKKKKRKSKKKKKGG) are enriched in basic residues. The segment covering 75 to 88 (AKVQSSPPRVPVSS) has biased composition (low complexity). Position 198 (His-198) interacts with substrate. A divalent metal cation is bound by residues Asp-218, Asp-229, and His-301. His-309 contacts substrate. The a divalent metal cation site is built by Glu-334 and Glu-429.

It belongs to the peptidase M24A family. Methionine aminopeptidase eukaryotic type 2 subfamily. Co(2+) serves as cofactor. It depends on Zn(2+) as a cofactor. The cofactor is Mn(2+). Fe(2+) is required as a cofactor.

The protein localises to the cytoplasm. The enzyme catalyses Release of N-terminal amino acids, preferentially methionine, from peptides and arylamides.. Cotranslationally removes the N-terminal methionine from nascent proteins. The N-terminal methionine is often cleaved when the second residue in the primary sequence is small and uncharged (Met-Ala-, Cys, Gly, Pro, Ser, Thr, or Val). The polypeptide is Methionine aminopeptidase 2-1 (Emericella nidulans (strain FGSC A4 / ATCC 38163 / CBS 112.46 / NRRL 194 / M139) (Aspergillus nidulans)).